The sequence spans 253 residues: Vitamin B12 import ATP-binding protein BtuD (253 aa).

An ABC transporter domain is found at 1 to 236 (MTNQLMALNQ…NTLSRVFAAD (236 aa)). 34 to 41 (GPNGSGKS) provides a ligand contact to ATP.

This sequence belongs to the ABC transporter superfamily. Vitamin B12 importer (TC 3.A.1.13.1) family. The complex is composed of two ATP-binding proteins (BtuD), two transmembrane proteins (BtuC) and a solute-binding protein (BtuF).

The protein resides in the cell inner membrane. It carries out the reaction an R-cob(III)alamin(out) + ATP + H2O = an R-cob(III)alamin(in) + ADP + phosphate + H(+). Its function is as follows. Part of the ABC transporter complex BtuCDF involved in vitamin B12 import. Responsible for energy coupling to the transport system. The polypeptide is Vitamin B12 import ATP-binding protein BtuD (Photorhabdus laumondii subsp. laumondii (strain DSM 15139 / CIP 105565 / TT01) (Photorhabdus luminescens subsp. laumondii)).